Consider the following 183-residue polypeptide: NADH-quinone oxidoreductase subunit B (183 aa).

C60, C61, C125, and C154 together coordinate [4Fe-4S] cluster.

This sequence belongs to the complex I 20 kDa subunit family. In terms of assembly, NDH-1 is composed of 14 different subunits. Subunits NuoB, C, D, E, F, and G constitute the peripheral sector of the complex. Requires [4Fe-4S] cluster as cofactor.

The protein resides in the cell inner membrane. The enzyme catalyses a quinone + NADH + 5 H(+)(in) = a quinol + NAD(+) + 4 H(+)(out). NDH-1 shuttles electrons from NADH, via FMN and iron-sulfur (Fe-S) centers, to quinones in the respiratory chain. The immediate electron acceptor for the enzyme in this species is believed to be ubiquinone. Couples the redox reaction to proton translocation (for every two electrons transferred, four hydrogen ions are translocated across the cytoplasmic membrane), and thus conserves the redox energy in a proton gradient. The protein is NADH-quinone oxidoreductase subunit B of Desulfovibrio desulfuricans (strain ATCC 27774 / DSM 6949 / MB).